A 399-amino-acid chain; its full sequence is S-adenosylmethionine synthase (399 aa).

Position 17 (histidine 17) interacts with ATP. Aspartate 19 is a Mg(2+) binding site. Residue glutamate 45 coordinates K(+). L-methionine-binding residues include glutamate 58 and glutamine 101. The flexible loop stretch occupies residues 101–111; that stretch reads QSADIAMGVDQ. Residues 177-179, 244-245, aspartate 253, 259-260, alanine 276, and lysine 280 contribute to the ATP site; these read DGK, RF, and RK. Residue aspartate 253 coordinates L-methionine. Lysine 284 serves as a coordination point for L-methionine.

It belongs to the AdoMet synthase family. Homotetramer; dimer of dimers. It depends on Mg(2+) as a cofactor. K(+) is required as a cofactor.

It is found in the cytoplasm. It catalyses the reaction L-methionine + ATP + H2O = S-adenosyl-L-methionine + phosphate + diphosphate. Its pathway is amino-acid biosynthesis; S-adenosyl-L-methionine biosynthesis; S-adenosyl-L-methionine from L-methionine: step 1/1. Functionally, catalyzes the formation of S-adenosylmethionine (AdoMet) from methionine and ATP. The overall synthetic reaction is composed of two sequential steps, AdoMet formation and the subsequent tripolyphosphate hydrolysis which occurs prior to release of AdoMet from the enzyme. This is S-adenosylmethionine synthase from Bacillus cereus (strain B4264).